We begin with the raw amino-acid sequence, 223 residues long: Ribose-5-phosphate isomerase A (223 aa).

Residues 32-35, 85-88, and 98-101 contribute to the substrate site; these read TGST, DGAD, and KGGG. Residue Glu107 is the Proton acceptor of the active site. Substrate is bound at residue Lys125.

The protein belongs to the ribose 5-phosphate isomerase family. As to quaternary structure, homodimer.

The catalysed reaction is aldehydo-D-ribose 5-phosphate = D-ribulose 5-phosphate. It functions in the pathway carbohydrate degradation; pentose phosphate pathway; D-ribose 5-phosphate from D-ribulose 5-phosphate (non-oxidative stage): step 1/1. In terms of biological role, catalyzes the reversible conversion of ribose-5-phosphate to ribulose 5-phosphate. This chain is Ribose-5-phosphate isomerase A, found in Pseudomonas fluorescens (strain ATCC BAA-477 / NRRL B-23932 / Pf-5).